Reading from the N-terminus, the 542-residue chain is CTP synthase (542 aa).

The interval 1 to 266 is amidoligase domain; it reads MATNYIFVTG…DDFICQRFHL (266 aa). Position 14 (Ser-14) interacts with CTP. Ser-14 is a binding site for UTP. Residues 15 to 20 and Asp-72 contribute to the ATP site; that span reads SLGKGI. The Mg(2+) site is built by Asp-72 and Glu-140. CTP-binding positions include 147-149, 187-192, and Lys-223; these read DIE and KTKPTQ. Residues 187–192 and Lys-223 contribute to the UTP site; that span reads KTKPTQ. Position 239–241 (239–241) interacts with ATP; that stretch reads KDV. The region spanning 291–542 is the Glutamine amidotransferase type-1 domain; the sequence is VIGMVGKYTE…VKAAKDNQKK (252 aa). Gly-352 is an L-glutamine binding site. Cys-379 serves as the catalytic Nucleophile; for glutamine hydrolysis. L-glutamine contacts are provided by residues 380 to 383, Glu-403, and Arg-470; that span reads LGMQ. Catalysis depends on residues His-515 and Glu-517.

The protein belongs to the CTP synthase family. In terms of assembly, homotetramer.

It carries out the reaction UTP + L-glutamine + ATP + H2O = CTP + L-glutamate + ADP + phosphate + 2 H(+). The enzyme catalyses L-glutamine + H2O = L-glutamate + NH4(+). The catalysed reaction is UTP + NH4(+) + ATP = CTP + ADP + phosphate + 2 H(+). It functions in the pathway pyrimidine metabolism; CTP biosynthesis via de novo pathway; CTP from UDP: step 2/2. Allosterically activated by GTP, when glutamine is the substrate; GTP has no effect on the reaction when ammonia is the substrate. The allosteric effector GTP functions by stabilizing the protein conformation that binds the tetrahedral intermediate(s) formed during glutamine hydrolysis. Inhibited by the product CTP, via allosteric rather than competitive inhibition. Catalyzes the ATP-dependent amination of UTP to CTP with either L-glutamine or ammonia as the source of nitrogen. Regulates intracellular CTP levels through interactions with the four ribonucleotide triphosphates. In Pasteurella multocida (strain Pm70), this protein is CTP synthase.